The chain runs to 264 residues: Taurine import ATP-binding protein TauB (264 aa).

An ABC transporter domain is found at 4–233; sequence LQLERISAQY…RYAAGESARA (230 aa). Residue 38 to 45 participates in ATP binding; sequence GPSGSGKT.

This sequence belongs to the ABC transporter superfamily. Taurine importer (TC 3.A.1.17.1) family. As to quaternary structure, the complex is composed of two ATP-binding proteins (TauB), two transmembrane proteins (TauC) and a solute-binding protein (TauA).

The protein resides in the cell inner membrane. It carries out the reaction taurine(out) + ATP + H2O = taurine(in) + ADP + phosphate + H(+). Functionally, part of the ABC transporter complex TauABC involved in taurine import. Responsible for energy coupling to the transport system. This is Taurine import ATP-binding protein TauB from Pseudomonas fluorescens (strain ATCC BAA-477 / NRRL B-23932 / Pf-5).